The sequence spans 445 residues: Glutamate--tRNA ligase 2 (445 aa).

The short motif at 10–20 (PSPTGRLHVGN) is the 'HIGH' region element. Positions 241–245 (ALSKR) match the 'KMSKS' region motif. Lys-244 serves as a coordination point for ATP.

This sequence belongs to the class-I aminoacyl-tRNA synthetase family. Glutamate--tRNA ligase type 1 subfamily. Monomer.

It localises to the cytoplasm. It carries out the reaction tRNA(Glu) + L-glutamate + ATP = L-glutamyl-tRNA(Glu) + AMP + diphosphate. In terms of biological role, catalyzes the attachment of glutamate to tRNA(Glu) in a two-step reaction: glutamate is first activated by ATP to form Glu-AMP and then transferred to the acceptor end of tRNA(Glu). This Hyphomonas neptunium (strain ATCC 15444) protein is Glutamate--tRNA ligase 2.